We begin with the raw amino-acid sequence, 293 residues long: Phosphatidylserine decarboxylase proenzyme (293 aa).

Catalysis depends on charge relay system; for autoendoproteolytic cleavage activity residues aspartate 88, histidine 144, and serine 247. Serine 247 serves as the catalytic Schiff-base intermediate with substrate; via pyruvic acid; for decarboxylase activity. Pyruvic acid (Ser); by autocatalysis is present on serine 247.

This sequence belongs to the phosphatidylserine decarboxylase family. PSD-B subfamily. Prokaryotic type I sub-subfamily. In terms of assembly, heterodimer of a large membrane-associated beta subunit and a small pyruvoyl-containing alpha subunit. It depends on pyruvate as a cofactor. Post-translationally, is synthesized initially as an inactive proenzyme. Formation of the active enzyme involves a self-maturation process in which the active site pyruvoyl group is generated from an internal serine residue via an autocatalytic post-translational modification. Two non-identical subunits are generated from the proenzyme in this reaction, and the pyruvate is formed at the N-terminus of the alpha chain, which is derived from the carboxyl end of the proenzyme. The autoendoproteolytic cleavage occurs by a canonical serine protease mechanism, in which the side chain hydroxyl group of the serine supplies its oxygen atom to form the C-terminus of the beta chain, while the remainder of the serine residue undergoes an oxidative deamination to produce ammonia and the pyruvoyl prosthetic group on the alpha chain. During this reaction, the Ser that is part of the protease active site of the proenzyme becomes the pyruvoyl prosthetic group, which constitutes an essential element of the active site of the mature decarboxylase.

It is found in the cell membrane. It carries out the reaction a 1,2-diacyl-sn-glycero-3-phospho-L-serine + H(+) = a 1,2-diacyl-sn-glycero-3-phosphoethanolamine + CO2. Its pathway is phospholipid metabolism; phosphatidylethanolamine biosynthesis; phosphatidylethanolamine from CDP-diacylglycerol: step 2/2. Functionally, catalyzes the formation of phosphatidylethanolamine (PtdEtn) from phosphatidylserine (PtdSer). The chain is Phosphatidylserine decarboxylase proenzyme from Xylella fastidiosa (strain M23).